Consider the following 198-residue polypeptide: Glutamyl-tRNA(Gln) amidotransferase subunit C, mitochondrial (198 aa).

Belongs to the GatC family. In terms of assembly, subunit of the heterotrimeric GatCAB amidotransferase (AdT) complex, composed of A, B and C subunits.

It localises to the mitochondrion. It carries out the reaction L-glutamyl-tRNA(Gln) + L-glutamine + ATP + H2O = L-glutaminyl-tRNA(Gln) + L-glutamate + ADP + phosphate + H(+). Functionally, allows the formation of correctly charged Gln-tRNA(Gln) through the transamidation of misacylated Glu-tRNA(Gln) in the mitochondria. The reaction takes place in the presence of glutamine and ATP through an activated gamma-phospho-Glu-tRNA(Gln). In Caenorhabditis remanei (Caenorhabditis vulgaris), this protein is Glutamyl-tRNA(Gln) amidotransferase subunit C, mitochondrial.